Reading from the N-terminus, the 156-residue chain is S-ribosylhomocysteine lyase (156 aa).

Histidine 54, histidine 58, and cysteine 123 together coordinate Fe cation.

Belongs to the LuxS family. In terms of assembly, homodimer. Fe cation is required as a cofactor.

The catalysed reaction is S-(5-deoxy-D-ribos-5-yl)-L-homocysteine = (S)-4,5-dihydroxypentane-2,3-dione + L-homocysteine. Involved in the synthesis of autoinducer 2 (AI-2) which is secreted by bacteria and is used to communicate both the cell density and the metabolic potential of the environment. The regulation of gene expression in response to changes in cell density is called quorum sensing. Catalyzes the transformation of S-ribosylhomocysteine (RHC) to homocysteine (HC) and 4,5-dihydroxy-2,3-pentadione (DPD). In Ligilactobacillus salivarius (strain UCC118) (Lactobacillus salivarius), this protein is S-ribosylhomocysteine lyase.